The chain runs to 166 residues: Phospholipase A2 inhibitor clone 10 (166 aa).

The signal sequence occupies residues 1 to 19 (MRLILLSSLLLLGIFLANG). Residues 46–161 (LKYSFLTVHR…CDDNLLVVCE (116 aa)) form the C-type lectin domain. Intrachain disulfides connect Cys83-Cys160 and Cys138-Cys152. N-linked (GlcNAc...) asparagine glycosylation is present at Asn122.

This sequence belongs to the alpha-type phospholipase A2 inhibitor family. Homotrimer; non-covalently linked. As to expression, expressed by the liver.

It localises to the secreted. In terms of biological role, this phospholipase A2 inhibitor binds directly phospholipase A2 in the presence or absence of calcium. This is Phospholipase A2 inhibitor clone 10 from Bothrops moojeni (Lance-headed viper).